Here is a 446-residue protein sequence, read N- to C-terminus: L-2-hydroxyglutarate dehydrogenase, mitochondrial (446 aa).

The transit peptide at 1–28 directs the protein to the mitochondrion; that stretch reads MKNSSSMLKGVKSFIGSGIYTNKPIYDV.

Belongs to the L2HGDH family. It depends on FAD as a cofactor.

Its subcellular location is the mitochondrion. The catalysed reaction is (S)-2-hydroxyglutarate + A = 2-oxoglutarate + AH2. The polypeptide is L-2-hydroxyglutarate dehydrogenase, mitochondrial (l2hgdh) (Dictyostelium discoideum (Social amoeba)).